The following is a 793-amino-acid chain: MGVWLNKDDFIRDLKRISLCLLILYVVVVVGTDQNFYSLLGVSKTASSREIRQAFKKLALKLHPDKNPNNPNAHGDFLKINRAYEVLKDEDLRKKYDKYGEKGLEDNQGGQYESWSYYRYDFGIYDDDPEIITLERREFDAAVNSGELWFVNFYSPGCSHCHDLAPTWREFAKEVDGLLRIGAVNCGDDRMLCRMKGVNSYPSLFIFRSGMAAVKYNGDRSKESLVAFAMQHVRSTVTELSTGNFVNAIETAFAAGVGWLITFCSKGEDCLTSQTRLRLSGMLDGLVNVGWVDCDAQDSLCKSLDTTASTTAYFPPGATLNDREKSSVLFLNSLDAKEIYMEIIHNLPDFELLSANQLEDRLAHHRWLVFFHFGKNENANDPELKKLKTLLKNEHIQVGRFDCSSAPGICSDLYVFQPCLAVFKGQGTKEYEIHHGKKILYDILAFAKESVNSHVTTLGPQNFPASDKEPWLVDFFAPWCPPCRALLPELRKASTLLYGQLKVGTLDCTIHEGLCNMYNIQAYPTTVVFNQSSIHEYEGHHSAEQILEFIEDLRNPSVVSLTPSTFNELVKQRKHDEVWMVDFYSPWCHPCQVLMPEWKRMARTLTGLINVGSVDCQQYHSFCTQENVQRYPEIRFYPQKSSKAYQYHSYNGWNRDAYSLRSWGLGFLPQASIDLTPQTFNEKVLQGKTHWVVDFYAPWCGPCQNFAPEFELLARMIKGKVRAGKVDCQAYPQTCQKAGIKAYPSVKLYQYERAKKSIWEEQINSRDAKTIAALIYGKLETLQSQVKRNKDEL.

The signal sequence occupies residues 1–32; sequence MGVWLNKDDFIRDLKRISLCLLILYVVVVVGT. The region spanning 35–100 is the J domain; it reads NFYSLLGVSK…DLRKKYDKYG (66 aa). Positions 130-232 constitute a Thioredoxin 1 domain; it reads EIITLERREF…ESLVAFAMQH (103 aa). An intrachain disulfide couples C158 to C161. Trxb stretches follow at residues 235–350 and 348–463; these read STVT…LPDF and PDFE…PQNF. Thioredoxin domains are found at residues 454-553, 557-665, and 671-776; these read HVTT…IEDL, SVVS…SWGL, and ASID…ALIY. Residues C480 and C483 are joined by a disulfide bond. A glycan (N-linked (GlcNAc...) asparagine) is linked at N530. Cystine bridges form between C588–C591 and C700–C703. A Prevents secretion from ER motif is present at residues 790–793; it reads KDEL.

As to quaternary structure, interacts with HSPA5 (via its J domain). Interacts with EDEM1. As to expression, ubiquitous. Particularly abundant in secretory tissues. Ubiquitous in fetal tissues and tumor tissues. Higher expression in fetal tissues than in adult tissues. Expressed in testis, pancreas, fetal thymus and fetal kidney. High expression in heart, liver, kidney, and testis. Low expression in spleen and skeletal muscle.

The protein localises to the endoplasmic reticulum lumen. Functionally, endoplasmic reticulum disulfide reductase involved both in the correct folding of proteins and degradation of misfolded proteins. Required for efficient folding of proteins in the endoplasmic reticulum by catalyzing the removal of non-native disulfide bonds formed during the folding of proteins, such as LDLR. Also involved in endoplasmic reticulum-associated degradation (ERAD) by reducing incorrect disulfide bonds in misfolded glycoproteins recognized by EDEM1. Interaction with HSPA5 is required its activity, not for the disulfide reductase activity, but to facilitate the release of DNAJC10 from its substrate. Promotes apoptotic signaling pathway in response to endoplasmic reticulum stress. This is DnaJ homolog subfamily C member 10 (Dnajc10) from Mus musculus (Mouse).